We begin with the raw amino-acid sequence, 548 residues long: Chaperonin GroEL (548 aa).

ATP is bound by residues 30-33 (TLGP), K51, 87-91 (DGTTT), G415, 479-481 (NAA), and D495. The segment at 526-548 (REDKSSDVASSPAGGMGGMGGMM) is disordered. Positions 539-548 (GGMGGMGGMM) are enriched in gly residues.

Belongs to the chaperonin (HSP60) family. In terms of assembly, forms a cylinder of 14 subunits composed of two heptameric rings stacked back-to-back. Interacts with the co-chaperonin GroES.

Its subcellular location is the cytoplasm. The catalysed reaction is ATP + H2O + a folded polypeptide = ADP + phosphate + an unfolded polypeptide.. Functionally, together with its co-chaperonin GroES, plays an essential role in assisting protein folding. The GroEL-GroES system forms a nano-cage that allows encapsulation of the non-native substrate proteins and provides a physical environment optimized to promote and accelerate protein folding. In Buchnera aphidicola subsp. Schizaphis graminum (strain Sg), this protein is Chaperonin GroEL.